Consider the following 777-residue polypeptide: Serine/threonine-protein kinase PTK2 (777 aa).

A disordered region spans residues 21–174; it reads NKLRGNNDST…ISSGSASSTN (154 aa). A compositionally biased stretch (low complexity) spans 30–41; sequence TPAAAPAPVPTK. 2 stretches are compositionally biased toward polar residues: residues 50–61 and 83–133; these read AHISRSASTNTP and RRST…SQHM. The segment covering 149-172 has biased composition (low complexity); that stretch reads SSVRGSSYSRHGSGSHISSGSASS. A Protein kinase domain is found at 222 to 529; that stretch reads DKDNKTIGSG…MEDLFNDPWF (308 aa). Residues 228–236 and Lys252 contribute to the ATP site; that span reads IGSGGSSEV. Asp355 functions as the Proton acceptor in the catalytic mechanism. Disordered stretches follow at residues 564 to 705 and 728 to 764; these read DAHP…EITE and SVSG…KKVV. 2 stretches are compositionally biased toward polar residues: residues 575–592 and 648–672; these read TDTN…AGTH and TNTT…TNEF. Over residues 677-694 the composition is skewed to low complexity; the sequence is NATTTDNDNVNTKATTAD. Residues 744 to 756 show a composition bias toward polar residues; the sequence is NRSIHSNATSTGT.

Belongs to the protein kinase superfamily. Ser/Thr protein kinase family.

It catalyses the reaction L-seryl-[protein] + ATP = O-phospho-L-seryl-[protein] + ADP + H(+). The catalysed reaction is L-threonyl-[protein] + ATP = O-phospho-L-threonyl-[protein] + ADP + H(+). This chain is Serine/threonine-protein kinase PTK2 (PTK2), found in Candida glabrata (strain ATCC 2001 / BCRC 20586 / JCM 3761 / NBRC 0622 / NRRL Y-65 / CBS 138) (Yeast).